The sequence spans 278 residues: Undecaprenyl-diphosphatase (278 aa).

6 helical membrane-spanning segments follow: residues 49 to 69, 97 to 117, 120 to 140, 197 to 217, 226 to 246, and 258 to 278; these read ANTFKIVIQLGSILAVIVVFW, HVLIGLLPAAVLGLLFEDFID, LFSIDTVIIGLAAGAILMIAA, ADFTFIMAVPIMFGASALSLV, GDLGFYVVGFIASFGFALLSI, and LVPFAIYRLVLAAVLAVIVYM.

It belongs to the UppP family.

It localises to the cell membrane. The catalysed reaction is di-trans,octa-cis-undecaprenyl diphosphate + H2O = di-trans,octa-cis-undecaprenyl phosphate + phosphate + H(+). In terms of biological role, catalyzes the dephosphorylation of undecaprenyl diphosphate (UPP). Confers resistance to bacitracin. In Exiguobacterium sibiricum (strain DSM 17290 / CCUG 55495 / CIP 109462 / JCM 13490 / 255-15), this protein is Undecaprenyl-diphosphatase.